A 457-amino-acid polypeptide reads, in one-letter code: Argininosuccinate lyase (457 aa).

This sequence belongs to the lyase 1 family. Argininosuccinate lyase subfamily.

It is found in the cytoplasm. It catalyses the reaction 2-(N(omega)-L-arginino)succinate = fumarate + L-arginine. The protein operates within amino-acid biosynthesis; L-arginine biosynthesis; L-arginine from L-ornithine and carbamoyl phosphate: step 3/3. This is Argininosuccinate lyase from Psychrobacter arcticus (strain DSM 17307 / VKM B-2377 / 273-4).